The sequence spans 354 residues: AT-rich binding protein (354 aa).

A C2H2-type 1 zinc finger spans residues 31–54 (IVCHTCQEELQTQDKFWKHIQDEH). 2 disordered regions span residues 84 to 124 (LPLY…HDDQ) and 256 to 276 (EVQQ…SSAM). Basic and acidic residues-rich tracts occupy residues 89 to 100 (KVSENDQQRDDV) and 109 to 124 (QKEP…HDDQ). Positions 264–276 (TNNSTTASASSAM) are enriched in low complexity. C2H2-type zinc fingers lie at residues 285–309 (YICD…RSVH) and 315–338 (FACE…KKKH).

As to quaternary structure, homooctamer. Fat body.

It is found in the nucleus. Functionally, may be a transcription factor for genes having (A+T) stretches in their promoter and/or enhancer regions. Binds to AT rich DNA. This Sarcophaga peregrina (Flesh fly) protein is AT-rich binding protein.